The chain runs to 431 residues: Adenylosuccinate lyase (431 aa).

N(6)-(1,2-dicarboxyethyl)-AMP contacts are provided by residues 4 to 5 (RY), 67 to 69 (RHD), and 93 to 94 (TS). H141 (proton donor/acceptor) is an active-site residue. N(6)-(1,2-dicarboxyethyl)-AMP is bound at residue Q212. The active-site Proton donor/acceptor is the S262. N(6)-(1,2-dicarboxyethyl)-AMP contacts are provided by residues S263, 268–270 (KRN), N276, and 307–311 (SAERI).

Belongs to the lyase 1 family. Adenylosuccinate lyase subfamily. As to quaternary structure, homotetramer. Residues from neighboring subunits contribute catalytic and substrate-binding residues to each active site.

The enzyme catalyses N(6)-(1,2-dicarboxyethyl)-AMP = fumarate + AMP. It catalyses the reaction (2S)-2-[5-amino-1-(5-phospho-beta-D-ribosyl)imidazole-4-carboxamido]succinate = 5-amino-1-(5-phospho-beta-D-ribosyl)imidazole-4-carboxamide + fumarate. Its pathway is purine metabolism; AMP biosynthesis via de novo pathway; AMP from IMP: step 2/2. The protein operates within purine metabolism; IMP biosynthesis via de novo pathway; 5-amino-1-(5-phospho-D-ribosyl)imidazole-4-carboxamide from 5-amino-1-(5-phospho-D-ribosyl)imidazole-4-carboxylate: step 2/2. In terms of biological role, catalyzes two reactions in de novo purine nucleotide biosynthesis. Catalyzes the breakdown of 5-aminoimidazole- (N-succinylocarboxamide) ribotide (SAICAR or 2-[5-amino-1-(5-phospho-beta-D-ribosyl)imidazole-4-carboxamido]succinate) to 5-aminoimidazole-4-carboxamide ribotide (AICAR or 5-amino-1-(5-phospho-beta-D-ribosyl)imidazole-4-carboxamide) and fumarate, and of adenylosuccinate (ADS or N(6)-(1,2-dicarboxyethyl)-AMP) to adenosine monophosphate (AMP) and fumarate. Influences the affinity of glutamyl--tRNA ligase for its substrates and increases its thermostability. The sequence is that of Adenylosuccinate lyase (purB) from Bacillus subtilis (strain 168).